An 809-amino-acid polypeptide reads, in one-letter code: Hydrazine synthase subunit alpha (809 aa).

A signal peptide spans 1 to 27 (MGKRKLGVIASAFVAGALVCGSTLVNA). C303 provides a ligand contact to Zn(2+). C583 and C586 together coordinate heme. A Zn(2+)-binding site is contributed by H587. Heme-binding residues include Y591, C685, C688, H689, and H772. The Cytochrome c domain maps to 633-792 (KGVKHGEDVV…AIVEWIDLGA (160 aa)).

Part of the hydrazine synthase complex that forms an elongated dimer of heterotrimers composed of one alpha, one beta and one gamma subunit. Heme c serves as cofactor.

The protein localises to the anammoxosome. It carries out the reaction hydrazine + 3 Fe(III)-[cytochrome c] + H2O = nitric oxide + 3 Fe(II)-[cytochrome c] + NH4(+) + 2 H(+). Its pathway is nitrogen metabolism. Component of the hydrazine synthase complex that catalyzes the condensation of nitric oxide (NO) with ammonium to form hydrazine. The alpha subunit catalyzes the second half-reaction, i.e. the condensation of hydroxylamine formed in the active site of the gamma subunit with ammonia, yielding hydrazine. Is involved in anaerobic ammonium oxidation (anammox), a biological process in which nitrite is used as the electron acceptor in the conversion of ammonium to dinitrogen gas (N2) and water; this bacterial process has a major role in the Earth's nitrogen cycle and has been estimated to synthesize up to 50% of the dinitrogen gas emitted into our atmosphere from the oceans. The polypeptide is Hydrazine synthase subunit alpha (Kuenenia stuttgartiensis).